Consider the following 221-residue polypeptide: Type II secretion system protein J (221 aa).

Positions 1–15 (MWRTNQVSSRQNMAG) are cleaved as a propeptide — leader sequence. Phe-16 is modified (N-methylphenylalanine). A helical membrane pass occupies residues 16 to 36 (FTLIEVLVAIAIFASLSVGAY).

It belongs to the GSP J family. Type II secretion is composed of four main components: the outer membrane complex, the inner membrane complex, the cytoplasmic secretion ATPase and the periplasm-spanning pseudopilus. Interacts with core component epsG. Cleaved by prepilin peptidase. In terms of processing, methylated by prepilin peptidase at the amino group of the N-terminal phenylalanine once the leader sequence is cleaved by prepilin peptidase.

It is found in the cell inner membrane. In terms of biological role, component of the type II secretion system required for the energy-dependent secretion of extracellular factors such as proteases and toxins from the periplasm. Part of the pseudopilus tip complex that is critical for the recognition and binding of secretion substrates. The sequence is that of Type II secretion system protein J (epsJ) from Vibrio cholerae serotype O1 (strain ATCC 39315 / El Tor Inaba N16961).